Reading from the N-terminus, the 423-residue chain is CinA-like protein (423 aa).

It belongs to the CinA family.

This Chlorobaculum tepidum (strain ATCC 49652 / DSM 12025 / NBRC 103806 / TLS) (Chlorobium tepidum) protein is CinA-like protein.